Consider the following 30-residue polypeptide: Thrombin-like enzyme LmrSP-2 (30 aa).

It belongs to the peptidase S1 family. Snake venom subfamily. Expressed by the venom gland.

Its subcellular location is the secreted. Functionally, thrombin-like snake venom serine protease that cleaves alpha-chain of fibrinogen (FGA) releases only fibrinopeptide A. Shows coagulant, esterase and amidase activities. The sequence is that of Thrombin-like enzyme LmrSP-2 from Lachesis muta rhombeata (Bushmaster).